A 421-amino-acid polypeptide reads, in one-letter code: WD repeat and SOCS box-containing protein 1 (421 aa).

WD repeat units follow at residues 124–165 (SRCV…LLLN), 168–208 (DHIE…NMVK), 212–251 (AHQNWVYSCAFSPDCSMLCSVGASKAVFLWNMDKYTMIRK), 254–293 (GHHHDVVACDFSPDGALLATASYDTRVYVWDPHNGDLLME), and 309–346 (ANDRWVRAVSFSHDGLHVASLADDKMVRFWRIDEDCPV). The region spanning 372-421 (DGSVYFWATPRQVPSLQHICRMSIRRVMSTQEVQKLPVPSKILAFLSYRG) is the SOCS box domain.

As to quaternary structure, interacts with DIO2. Component of the probable ECS(WSB1) E3 ubiquitin-protein ligase complex which contains CUL5, RNF7/RBX2, Elongin BC complex and WSB1. Component of a probable ECS-like E3 ubiquitin-protein ligase complex which contains CUL5, RBX1, Elongin BC complex and WSB1. Interacts with CUL5, RNF7, ELOB and ELOC. Binds to HIPK2 through WD40 repeats.

It participates in protein modification; protein ubiquitination. Probable substrate-recognition component of a SCF-like ECS (Elongin-Cullin-SOCS-box protein) E3 ubiquitin ligase complex which mediates the ubiquitination and subsequent proteasomal degradation of target proteins. Recognizes type II iodothyronine deiodinase/DIO2. Confers constitutive instability to HIPK2 through proteasomal degradation. This Mus musculus (Mouse) protein is WD repeat and SOCS box-containing protein 1 (Wsb1).